Consider the following 170-residue polypeptide: Acireductone dioxygenase (170 aa).

H99, H101, E105, and H144 together coordinate Fe(2+). 4 residues coordinate Ni(2+): H99, H101, E105, and H144.

Belongs to the acireductone dioxygenase (ARD) family. Monomer. The cofactor is Fe(2+). Requires Ni(2+) as cofactor.

It catalyses the reaction 1,2-dihydroxy-5-(methylsulfanyl)pent-1-en-3-one + O2 = 3-(methylsulfanyl)propanoate + CO + formate + 2 H(+). The catalysed reaction is 1,2-dihydroxy-5-(methylsulfanyl)pent-1-en-3-one + O2 = 4-methylsulfanyl-2-oxobutanoate + formate + 2 H(+). It functions in the pathway amino-acid biosynthesis; L-methionine biosynthesis via salvage pathway; L-methionine from S-methyl-5-thio-alpha-D-ribose 1-phosphate: step 5/6. Catalyzes 2 different reactions between oxygen and the acireductone 1,2-dihydroxy-3-keto-5-methylthiopentene (DHK-MTPene) depending upon the metal bound in the active site. Fe-containing acireductone dioxygenase (Fe-ARD) produces formate and 2-keto-4-methylthiobutyrate (KMTB), the alpha-ketoacid precursor of methionine in the methionine recycle pathway. Ni-containing acireductone dioxygenase (Ni-ARD) produces methylthiopropionate, carbon monoxide and formate, and does not lie on the methionine recycle pathway. The protein is Acireductone dioxygenase of Bacillus mycoides (strain KBAB4) (Bacillus weihenstephanensis).